The primary structure comprises 361 residues: Phosphoserine aminotransferase (361 aa).

R43 contacts L-glutamate. Pyridoxal 5'-phosphate is bound by residues 77–78, W103, T152, D172, and Q195; that span reads AS. Position 196 is an N6-(pyridoxal phosphate)lysine (K196). 237 to 238 lines the pyridoxal 5'-phosphate pocket; it reads NT.

This sequence belongs to the class-V pyridoxal-phosphate-dependent aminotransferase family. SerC subfamily. Homodimer. Pyridoxal 5'-phosphate serves as cofactor.

The protein localises to the cytoplasm. The catalysed reaction is O-phospho-L-serine + 2-oxoglutarate = 3-phosphooxypyruvate + L-glutamate. The enzyme catalyses 4-(phosphooxy)-L-threonine + 2-oxoglutarate = (R)-3-hydroxy-2-oxo-4-phosphooxybutanoate + L-glutamate. The protein operates within amino-acid biosynthesis; L-serine biosynthesis; L-serine from 3-phospho-D-glycerate: step 2/3. Its pathway is cofactor biosynthesis; pyridoxine 5'-phosphate biosynthesis; pyridoxine 5'-phosphate from D-erythrose 4-phosphate: step 3/5. Functionally, catalyzes the reversible conversion of 3-phosphohydroxypyruvate to phosphoserine and of 3-hydroxy-2-oxo-4-phosphonooxybutanoate to phosphohydroxythreonine. This is Phosphoserine aminotransferase from Desulfatibacillum aliphaticivorans.